The chain runs to 83 residues: RNA-binding protein Hfq (83 aa).

Positions 10–69 (DPFLNALRREHVPVSIYLVNGIKLQGQIESFDQYVVLLRNTVTQMVYKHAISTIVPGRAV) constitute a Sm domain.

This sequence belongs to the Hfq family. In terms of assembly, homohexamer.

Its function is as follows. RNA chaperone that binds small regulatory RNA (sRNAs) and mRNAs to facilitate mRNA translational regulation in response to envelope stress, environmental stress and changes in metabolite concentrations. Also binds with high specificity to tRNAs. This chain is RNA-binding protein Hfq, found in Acidovorax ebreus (strain TPSY) (Diaphorobacter sp. (strain TPSY)).